Consider the following 655-residue polypeptide: p-hydroxybenzoic acid efflux pump subunit AaeB (655 aa).

Residues 1–12 (MGIFSIANQHIR) lie on the Periplasmic side of the membrane. The chain crosses the membrane as a helical span at residues 13-33 (FAVKLATAIVLALFVGFHFQL). Topologically, residues 34–37 (ETPR) are cytoplasmic. The helical transmembrane segment at 38 to 58 (WAVLTAAIVAAGTAFAAGGEP) threads the bilayer. Residues 59 to 68 (YSGAIRYRGF) lie on the Periplasmic side of the membrane. A helical transmembrane segment spans residues 69-89 (LRIIGTFIGCIAGLVIIIAMI). Over 90–92 (RAP) the chain is Cytoplasmic. A helical transmembrane segment spans residues 93 to 113 (LLMILVCCIWAGFCTWISSLV). The Periplasmic portion of the chain corresponds to 114–120 (RIENSYA). A helical transmembrane segment spans residues 121–141 (WGLAGYTALIIVITIQPEPLL). Over 142-151 (TPQFAVERCS) the chain is Cytoplasmic. Residues 152 to 172 (EIVIGIVCAIMADLLFSPRSI) traverse the membrane as a helical segment. At 173-369 (KQEVDRELES…RTTLSCILGT (197 aa)) the chain is on the periplasmic side. Residues 370–390 (LFWLWTGWTSGSGAMVMIAVV) form a helical membrane-spanning segment. Topologically, residues 391 to 406 (TSLAMRLPNPRMVAID) are cytoplasmic. Residues 407–427 (FIYGTLAALPLGLLYFLVIIP) traverse the membrane as a helical segment. The Periplasmic portion of the chain corresponds to 428–430 (NTQ). The chain crosses the membrane as a helical span at residues 431-451 (QSMLLLCISLAVLGFFLGIEV). Over 452–458 (QKRRLGS) the chain is Cytoplasmic. Residues 459-479 (MGALASTINIIVLDNPMTFHF) form a helical membrane-spanning segment. At 480–481 (SQ) the chain is on the periplasmic side. A helical membrane pass occupies residues 482–502 (FLDSALGQIVGCVLAFTVILL). The Cytoplasmic portion of the chain corresponds to 503–655 (VRDKSRDRTG…HKYQHALTDS (153 aa)).

This sequence belongs to the aromatic acid exporter ArAE (TC 2.A.85) family.

The protein localises to the cell inner membrane. Its function is as follows. Forms an efflux pump with AaeA. Could function as a metabolic relief valve, allowing to eliminate certain compounds when they accumulate to high levels in the cell. Substrates are p-hydroxybenzoic acid (pHBA), 6-hydroxy-2-naphthoic and 2-hydroxycinnamate. The protein is p-hydroxybenzoic acid efflux pump subunit AaeB of Escherichia coli (strain K12).